The following is a 593-amino-acid chain: Arginine--tRNA ligase (593 aa).

A 'HIGH' region motif is present at residues 138-148 (ANPTGPLHVGH).

It belongs to the class-I aminoacyl-tRNA synthetase family. Monomer.

Its subcellular location is the cytoplasm. The catalysed reaction is tRNA(Arg) + L-arginine + ATP = L-arginyl-tRNA(Arg) + AMP + diphosphate. The polypeptide is Arginine--tRNA ligase (Burkholderia orbicola (strain MC0-3)).